The following is a 338-amino-acid chain: MPFCHNIINISCVKNNWSNDVRASLYSLMALIILTTLVGNLIVIVSISHFKQLHTPTNWLIHSMATVDFLLGCLVMPYSMVRSAEHCWYFGEVFCKIHTSTDIMLSSASIFHLSFISIDRYYAVCDPLRYKAKINILVVCVMIFISWSVPAVFAFGMIFLELNFKGAEEIYYKHVHCRGGCSVFFSKISGVLAFMTSFYIPGSIMLCIYYRIYLIAKEQARSINDANQKLQIGLEMKNGISQSKERKAVKTLGIVMGVFLICWCPFFVCTVIDPFLHYTIPPTLNDVLIWFGYLNSTFNPMVYAFFYPWFRKALKMILFGKIFQKDSSRCKLFLESSS.

The Extracellular segment spans residues 1–24 (MPFCHNIINISCVKNNWSNDVRAS). Cystine bridges form between Cys-4–Cys-177, Cys-12–Cys-87, and Cys-95–Cys-181. Asn-9 and Asn-16 each carry an N-linked (GlcNAc...) asparagine glycan. The chain crosses the membrane as a helical span at residues 25 to 45 (LYSLMALIILTTLVGNLIVIV). Residues 46 to 58 (SISHFKQLHTPTN) are Cytoplasmic-facing. The chain crosses the membrane as a helical span at residues 59 to 79 (WLIHSMATVDFLLGCLVMPYS). Over 80-97 (MVRSAEHCWYFGEVFCKI) the chain is Extracellular. Residues 98 to 118 (HTSTDIMLSSASIFHLSFISI) traverse the membrane as a helical segment. Residue Asp-102 participates in 2-phenylethylamine binding. The Cytoplasmic segment spans residues 119-135 (DRYYAVCDPLRYKAKIN). Residues 136 to 156 (ILVVCVMIFISWSVPAVFAFG) traverse the membrane as a helical segment. Residues 157-187 (MIFLELNFKGAEEIYYKHVHCRGGCSVFFSK) are Extracellular-facing. A helical membrane pass occupies residues 188–208 (ISGVLAFMTSFYIPGSIMLCI). At 209-251 (YYRIYLIAKEQARSINDANQKLQIGLEMKNGISQSKERKAVKT) the chain is on the cytoplasmic side. The chain crosses the membrane as a helical span at residues 252-272 (LGIVMGVFLICWCPFFVCTVI). At 273–286 (DPFLHYTIPPTLND) the chain is on the extracellular side. A helical transmembrane segment spans residues 287-307 (VLIWFGYLNSTFNPMVYAFFY). Topologically, residues 308-338 (PWFRKALKMILFGKIFQKDSSRCKLFLESSS) are cytoplasmic.

It belongs to the G-protein coupled receptor 1 family.

The protein localises to the endomembrane system. It is found in the endoplasmic reticulum membrane. Its subcellular location is the cell membrane. Its function is as follows. Intracellular G-protein coupled receptor for trace amines, which recognizes endogenous amine-containing metabolites such as beta-phenylethylamine (beta-PEA), 3-iodothyronamine (T1AM), isoamylamine (IAA), cadaverine (CAD), cyclohexylamine (CHA), p-tyramine (p-TYR), trimethylamine (TMA), octopamine and tryptamine. Also functions as a receptor for various drugs and psychoactive substances, such as amphetamine and methamphetamine. Unresponsive to classical biogenic amines, such as epinephrine and histamine and only partially activated by dopamine and serotonin. Expressed in both the central and peripheral nervous system: TAAR1 activation regulates the activity of several neurotransmitter signaling pathways by (1) decreasing the basal firing rates of the neurons involved and by (2) lowering the sensitivity of receptors to neurotransmitters. Ligand binding causes a conformation change that triggers signaling via guanine nucleotide-binding proteins (G proteins) and modulates the activity of downstream effectors. TAAR1 is coupled with different G(i)/G(o)-, G(s)- or G(q)/G(11) classes of G alpha proteins depending on the ligand. CAD-binding is coupled to G(i)/G(o) G alpha proteins and mediates inhibition of adenylate cyclase activity. T1AM- or beta-PEA-binding is coupled to G(s) G alpha proteins and mediates activation of adenylate cyclase activity. CHA- or IAA-binding is coupled to G(q)/G(11) G alpha proteins and activates phospholipase C-beta, releasing diacylglycerol (DAG) and inositol 1,4,5-trisphosphate (IP3) second messengers. TMA-binding is coupled with all three G(i)/G(o)-, G(s)- or G(q)/G(11) G alpha protein subtypes. This chain is Trace amine-associated receptor 1 (TAAR1), found in Macaca mulatta (Rhesus macaque).